Reading from the N-terminus, the 353-residue chain is Draxin-B (353 aa).

An N-terminal signal peptide occupies residues 1–21 (MASSWCLPLALLVSNLAVSHS). 3 disordered regions span residues 23-183 (EPSS…KEGS), 198-222 (TVMS…RGKV), and 246-268 (VDAW…SGNV). Over residues 138–167 (GPHKGKAQGHGHHFDHRRHGGRRDKGRHTK) the composition is skewed to basic residues. Residues 252–261 (SRKKDKRRSK) show a composition bias toward basic residues. Residues Asn-262 and Asn-267 are each glycosylated (N-linked (GlcNAc...) asparagine).

It belongs to the draxin family.

It localises to the secreted. Functionally, chemorepulsive axon guidance protein required for the development of spinal cord and forebrain commissures. Acts as a chemorepulsive guidance protein for commissural axons during development. Able to inhibit or repel neurite outgrowth from dorsal spinal cord. The chain is Draxin-B (draxin-B) from Salmo salar (Atlantic salmon).